A 164-amino-acid chain; its full sequence is Terminase, small subunit (164 aa).

The segment at 1-35 is helix-turn-helix (HTH); sequence MEGLDINKLLDISDLPGIDGEEIKVYEPLQLVEVK. The interval 1 to 35 is interaction with gp17; that stretch reads MEGLDINKLLDISDLPGIDGEEIKVYEPLQLVEVK. Positions 36 to 114 are oligomerization; the sequence is SNPQNRTPDL…KDMKDITSEQ (79 aa). An interaction with gp17 region spans residues 115 to 164; that stretch reads VGTKGAVPTGQMNIQNATVFMGSPTELMDEIGDAYEAQEAREKVINGTTD.

As to quaternary structure, homooctamer. Interacts with the terminase large subunit gp17; the active complex is probably heterooligomeric.

Its function is as follows. The terminase small subunit binds to the packaging initiation site and regulates the ATPase activity of the terminase large subunit. The terminase lies at a unique vertex of the procapsid and is composed of two subunits, a small terminase subunit involved in viral DNA recognition (packaging 'pac' sequence), and a large terminase subunit possessing endonucleolytic and ATPase activities. Both terminase subunits heterooligomerize and are docked on the portal protein to form the packaging machine. The terminase large subunit exhibits endonuclease activity and cleaves the viral genome concatemer once the capsid is full (headful packaging). Once the capsid is packaged with the DNA, the terminase complex is substituted by neck proteins. The protein is Terminase, small subunit (16) of Enterobacteria phage T4 (Bacteriophage T4).